The chain runs to 261 residues: Succinate dehydrogenase iron-sulfur subunit (261 aa).

Residues 1–23 (MAELRLPPNSVVKKGKEHKEQEE) form a disordered region. The 92-residue stretch at 28 to 119 (RKVKIYRYDP…DIKIYPLPHM (92 aa)) folds into the 2Fe-2S ferredoxin-type domain. [2Fe-2S] cluster is bound by residues C80, C85, and C100. The 4Fe-4S ferredoxin-type domain maps to 161–191 (GREKLDGLYECILCACCSTSCPSYWWNGDKY). Residues C171, C174, and C177 each contribute to the [4Fe-4S] cluster site. C181 is a [3Fe-4S] cluster binding site. W186 contributes to the a ubiquinone binding site. [3Fe-4S] cluster is bound by residues C228 and C234. C238 contributes to the [4Fe-4S] cluster binding site.

It belongs to the succinate dehydrogenase/fumarate reductase iron-sulfur protein family. In terms of assembly, part of an enzyme complex containing four subunits: a flavoprotein, an iron-sulfur, cytochrome b-556, and a hydrophobic anchor protein. [2Fe-2S] cluster is required as a cofactor. It depends on [3Fe-4S] cluster as a cofactor. The cofactor is [4Fe-4S] cluster.

The catalysed reaction is a quinone + succinate = fumarate + a quinol. Its pathway is carbohydrate metabolism; tricarboxylic acid cycle; fumarate from succinate (bacterial route): step 1/1. This chain is Succinate dehydrogenase iron-sulfur subunit (sdhB), found in Rickettsia felis (strain ATCC VR-1525 / URRWXCal2) (Rickettsia azadi).